The sequence spans 100 residues: Urease subunit gamma (100 aa).

The protein belongs to the urease gamma subunit family. As to quaternary structure, heterotrimer of UreA (gamma), UreB (beta) and UreC (alpha) subunits. Three heterotrimers associate to form the active enzyme.

Its subcellular location is the cytoplasm. The enzyme catalyses urea + 2 H2O + H(+) = hydrogencarbonate + 2 NH4(+). It participates in nitrogen metabolism; urea degradation; CO(2) and NH(3) from urea (urease route): step 1/1. This Polynucleobacter asymbioticus (strain DSM 18221 / CIP 109841 / QLW-P1DMWA-1) (Polynucleobacter necessarius subsp. asymbioticus) protein is Urease subunit gamma.